A 500-amino-acid chain; its full sequence is Probable cytosol aminopeptidase (500 aa).

Residues lysine 268 and aspartate 273 each contribute to the Mn(2+) site. Lysine 280 is a catalytic residue. Aspartate 291, aspartate 350, and glutamate 352 together coordinate Mn(2+). The active site involves arginine 354.

Belongs to the peptidase M17 family. Requires Mn(2+) as cofactor.

Its subcellular location is the cytoplasm. The enzyme catalyses Release of an N-terminal amino acid, Xaa-|-Yaa-, in which Xaa is preferably Leu, but may be other amino acids including Pro although not Arg or Lys, and Yaa may be Pro. Amino acid amides and methyl esters are also readily hydrolyzed, but rates on arylamides are exceedingly low.. It carries out the reaction Release of an N-terminal amino acid, preferentially leucine, but not glutamic or aspartic acids.. Functionally, presumably involved in the processing and regular turnover of intracellular proteins. Catalyzes the removal of unsubstituted N-terminal amino acids from various peptides. This is Probable cytosol aminopeptidase from Baumannia cicadellinicola subsp. Homalodisca coagulata.